Reading from the N-terminus, the 34-residue chain is Papillosin (34 aa).

Its function is as follows. Has strong antibacterial activity against the Gram-positive bacteria M.luteus, S.aureus, B.megaterium, A.viridans and E.faecalis, and against the Gram-negative bacteria K.pneumoniae, E.coli DH5alpha, S.typhimurium, P.aeruginosa and E.aerogenes. Lacks hemolytic activity against sheep erythrocytes. This chain is Papillosin, found in Halocynthia papillosa (Red sea-squirt).